We begin with the raw amino-acid sequence, 70 residues long: Putative membrane protein insertion efficiency factor (70 aa).

This sequence belongs to the UPF0161 family.

It is found in the cell membrane. Functionally, could be involved in insertion of integral membrane proteins into the membrane. This chain is Putative membrane protein insertion efficiency factor, found in Chloroflexus aurantiacus (strain ATCC 29366 / DSM 635 / J-10-fl).